Consider the following 94-residue polypeptide: Large ribosomal subunit protein bL27 (94 aa).

The propeptide occupies 1 to 9 (MLRLDLQFF).

This sequence belongs to the bacterial ribosomal protein bL27 family. Post-translationally, the N-terminus is cleaved by ribosomal processing cysteine protease Prp.

The protein is Large ribosomal subunit protein bL27 of Bacillus velezensis (strain DSM 23117 / BGSC 10A6 / LMG 26770 / FZB42) (Bacillus amyloliquefaciens subsp. plantarum).